The sequence spans 129 residues: Small ribosomal subunit protein uS12 (129 aa).

Asp89 is modified (3-methylthioaspartic acid). The interval 110–129 (RKQGRSRYGAPRKQVVATKK) is disordered.

It belongs to the universal ribosomal protein uS12 family. Part of the 30S ribosomal subunit. Contacts proteins S8 and S17. May interact with IF1 in the 30S initiation complex.

In terms of biological role, with S4 and S5 plays an important role in translational accuracy. Interacts with and stabilizes bases of the 16S rRNA that are involved in tRNA selection in the A site and with the mRNA backbone. Located at the interface of the 30S and 50S subunits, it traverses the body of the 30S subunit contacting proteins on the other side and probably holding the rRNA structure together. The combined cluster of proteins S8, S12 and S17 appears to hold together the shoulder and platform of the 30S subunit. This is Small ribosomal subunit protein uS12 from Rickettsia bellii (strain RML369-C).